Consider the following 134-residue polypeptide: Agouti-related protein (134 aa).

The signal sequence occupies residues 1–20 (MLTTMLLSCALLLAMPTMLG). The propeptide occupies 21–84 (AQIGLAPLEG…VLDPEGRKAR (64 aa)). Disulfide bonds link Cys-89–Cys-104, Cys-96–Cys-110, Cys-103–Cys-121, Cys-107–Cys-131, and Cys-112–Cys-119. The 43-residue stretch at 89–131 (CVRLHESCLGHQVPCCDPCATCYCRFFNAFCYCRKLGTATNPC) folds into the Agouti domain. The segment at 113 to 115 (RFF) is interaction with melanocortin receptors.

In terms of assembly, interacts with melanocortin receptors MC3R, MC4R and MC5R.

It is found in the secreted. It localises to the golgi apparatus lumen. Plays a role in weight homeostasis. Involved in the control of feeding behavior through the central melanocortin system. Acts as alpha melanocyte-stimulating hormone antagonist by inhibiting cAMP production mediated by stimulation of melanocortin receptors within the hypothalamus and adrenal gland. Has very low activity with MC5R. Is an inverse agonist for MC3R and MC4R being able to suppress their constitutive activity. It promotes MC3R and MC4R endocytosis in an arrestin-dependent manner. This is Agouti-related protein (AGRP) from Sus scrofa (Pig).